The primary structure comprises 357 residues: Geranylgeranyl pyrophosphate synthase spyE (357 aa).

Residues 36-60 (EAQSQAVPGTRTETEPTGSSPSDLQ) form a disordered region. Residues 50–59 (EPTGSSPSDL) show a composition bias toward polar residues. 3 residues coordinate isopentenyl diphosphate: lysine 84, arginine 87, and histidine 116. The Mg(2+) site is built by aspartate 123 and aspartate 127. Arginine 132 serves as a coordination point for dimethylallyl diphosphate. Arginine 133 lines the isopentenyl diphosphate pocket. Positions 210, 211, and 244 each coordinate dimethylallyl diphosphate. Aspartate 247 contacts Mg(2+). The dimethylallyl diphosphate site is built by asparagine 251, lysine 261, and lysine 271.

It belongs to the FPP/GGPP synthase family. Mg(2+) serves as cofactor.

The enzyme catalyses isopentenyl diphosphate + dimethylallyl diphosphate = (2E)-geranyl diphosphate + diphosphate. It carries out the reaction isopentenyl diphosphate + (2E)-geranyl diphosphate = (2E,6E)-farnesyl diphosphate + diphosphate. The catalysed reaction is isopentenyl diphosphate + (2E,6E)-farnesyl diphosphate = (2E,6E,10E)-geranylgeranyl diphosphate + diphosphate. It functions in the pathway secondary metabolite biosynthesis; terpenoid biosynthesis. Geranylgeranyl pyrophosphate synthase; part of the gene cluster that mediates the biosynthesis of meroterpenoids called sartorypyrones. Within the pathway, spyE provides the spyF cosubstrate geranylgeranyl pyrophosphate (GGPP) for the prenylation of triacetic acid lactone (TAL). The biosynthesis of sartorypyrones begins with the production of triacetic acid lactone (TAL) by the NR-PKS spyA using one molecule of acetyl-CoA and two molecules of malonyl-CoA. The prenyltransferase spyF then conjugates geranylgeranyl pyrophosphate (GGPP) to TAL to form geranylgeranyl-triacetate lactone, for which the pathway-specific geranylgeranyl pyrophosphate synthase (GGPS) spyE is required to provide GGPP. Subsequently, geranylgeranyl-triacetate lactone is epoxidized at the terminal olein by the FAD-dependent monooxygenase spyC, followed by cyclization of the terpenoid component catalyzed by the terpene cyclase spyD to produce both the bicyclic sartorypyrone F and the monocyclic sartorypyrone D. Finally, the last step of the biosynthesis involves the acetylation of the meroterpenoids sartorypyrones D and F by the acetyltransferase SpyB to produce sartorypyrones A and G, respectively. In Aspergillus fumigatus (strain ATCC MYA-4609 / CBS 101355 / FGSC A1100 / Af293) (Neosartorya fumigata), this protein is Geranylgeranyl pyrophosphate synthase spyE.